Consider the following 1235-residue polypeptide: ATP-dependent helicase/nuclease subunit A (1235 aa).

The UvrD-like helicase ATP-binding domain maps to 12–482; it reads ALWTDDQWKA…IDLSQNFRSR (471 aa). 33–40 provides a ligand contact to ATP; the sequence is AAAGSGKT. The UvrD-like helicase C-terminal domain occupies 509–800; it reads AAELTLGASF…RMMTIHASKG (292 aa).

It belongs to the helicase family. AddA subfamily. As to quaternary structure, heterodimer of AddA and AddB/RexB. It depends on Mg(2+) as a cofactor.

It carries out the reaction Couples ATP hydrolysis with the unwinding of duplex DNA by translocating in the 3'-5' direction.. The enzyme catalyses ATP + H2O = ADP + phosphate + H(+). Its function is as follows. The heterodimer acts as both an ATP-dependent DNA helicase and an ATP-dependent, dual-direction single-stranded exonuclease. Recognizes the chi site generating a DNA molecule suitable for the initiation of homologous recombination. The AddA nuclease domain is required for chi fragment generation; this subunit has the helicase and 3' -&gt; 5' nuclease activities. This is ATP-dependent helicase/nuclease subunit A from Listeria innocua serovar 6a (strain ATCC BAA-680 / CLIP 11262).